The sequence spans 445 residues: tRNA modification GTPase MnmE (445 aa).

(6S)-5-formyl-5,6,7,8-tetrahydrofolate contacts are provided by R25, E83, and K121. The TrmE-type G domain maps to 217–371 (GVRVVILGPP…LLTLIQEKSR (155 aa)). Residues 227-232 (NAGKST), 246-252 (SEHPGTT), and 271-274 (DTAG) each bind GTP. Residues S231 and T252 each contribute to the Mg(2+) site. A (6S)-5-formyl-5,6,7,8-tetrahydrofolate-binding site is contributed by K445.

It belongs to the TRAFAC class TrmE-Era-EngA-EngB-Septin-like GTPase superfamily. TrmE GTPase family. In terms of assembly, homodimer. Heterotetramer of two MnmE and two MnmG subunits. K(+) is required as a cofactor.

It localises to the cytoplasm. Functionally, exhibits a very high intrinsic GTPase hydrolysis rate. Involved in the addition of a carboxymethylaminomethyl (cmnm) group at the wobble position (U34) of certain tRNAs, forming tRNA-cmnm(5)s(2)U34. This is tRNA modification GTPase MnmE from Anaplasma phagocytophilum (strain HZ).